A 757-amino-acid chain; its full sequence is Protein hunchback (757 aa).

Disordered regions lie at residues Glu30 to Ser51 and Glu171 to Lys213. Polar residues predominate over residues Ser39 to Ser51. The segment covering Glu197–Lys213 has biased composition (basic and acidic residues). 4 C2H2-type zinc fingers span residues Tyr239 to His261, Leu268 to His290, Phe296 to His318, and Tyr324 to His348. Disordered stretches follow at residues Asp367–Ser416, Glu511–Lys535, and Met602–Ser694. 2 stretches are compositionally biased toward low complexity: residues Val397 to Ala414 and Gln512 to Ser521. Acidic residues predominate over residues Asp522–Glu531. The segment covering Ala651 to Ser694 has biased composition (low complexity). 2 consecutive C2H2-type zinc fingers follow at residues Tyr704–His726 and Phe732–His756.

It belongs to the hunchback C2H2-type zinc-finger protein family.

Its subcellular location is the nucleus. Gap class segmentation protein that controls development of head structures. This is Protein hunchback (hb) from Drosophila sechellia (Fruit fly).